We begin with the raw amino-acid sequence, 209 residues long: Orotate phosphoribosyltransferase (209 aa).

5-phospho-alpha-D-ribose 1-diphosphate is bound by residues arginine 96, lysine 100, histidine 102, and 122 to 130 (EDLISTGKS). Serine 126 is a binding site for orotate.

It belongs to the purine/pyrimidine phosphoribosyltransferase family. PyrE subfamily. As to quaternary structure, homodimer. Mg(2+) serves as cofactor.

The catalysed reaction is orotidine 5'-phosphate + diphosphate = orotate + 5-phospho-alpha-D-ribose 1-diphosphate. Its pathway is pyrimidine metabolism; UMP biosynthesis via de novo pathway; UMP from orotate: step 1/2. Functionally, catalyzes the transfer of a ribosyl phosphate group from 5-phosphoribose 1-diphosphate to orotate, leading to the formation of orotidine monophosphate (OMP). This chain is Orotate phosphoribosyltransferase, found in Coxiella burnetii (strain RSA 493 / Nine Mile phase I).